Consider the following 501-residue polypeptide: Beta-secretase 1 (501 aa).

The N-terminal stretch at 1-21 (MAQALPWLLLWMGSGVLPAHG) is a signal peptide. A propeptide spanning residues 22–45 (SQPGIRLPLRSGLGGAPLGLRLPR) is cleaved from the precursor. At 22–457 (SQPGIRLPLR…PQTDESTLMT (436 aa)) the chain is on the extracellular side. The interval 39–58 (LGLRLPRETDEESEEPGRRG) is disordered. A Peptidase A1 domain is found at 75-416 (YYVEMTLGSP…DRARKRIGFA (342 aa)). Aspartate 93 is a catalytic residue. At lysine 126 the chain carries N6-acetyllysine. N-linked (GlcNAc...) asparagine glycosylation is found at asparagine 153, asparagine 172, and asparagine 223. Cystine bridges form between cysteine 216–cysteine 420, cysteine 278–cysteine 443, and cysteine 330–cysteine 380. Lysine 275, lysine 279, and lysine 285 each carry N6-acetyllysine. The active site involves aspartate 289. N6-acetyllysine is present on residues lysine 299, lysine 300, and lysine 307. An N-linked (GlcNAc...) asparagine glycan is attached at asparagine 354. A helical membrane pass occupies residues 458-478 (IAYVMAAICALFMLPLCLMVC). Residues cysteine 474, cysteine 478, cysteine 482, and cysteine 485 are each lipidated (S-palmitoyl cysteine). The Cytoplasmic portion of the chain corresponds to 479-501 (QWRCLRCLRHQHDDFADDISLLK). The interaction with RTN3 stretch occupies residues 479–501 (QWRCLRCLRHQHDDFADDISLLK). The DXXLL signature appears at 496–500 (DISLL). Residue serine 498 is modified to Phosphoserine. Residue lysine 501 forms a Glycyl lysine isopeptide (Lys-Gly) (interchain with G-Cter in ubiquitin) linkage.

Belongs to the peptidase A1 family. As to quaternary structure, monomer. Interacts (via DXXLL motif) with GGA1, GGA2 and GGA3 (via their VHS domain); the interaction highly increases when BACE1 is phosphorylated at Ser-498. Interacts with RTN1; RTN2; RTN3 and RTN4; the interaction leads to inhibition of amyloid precursor protein processing. Interacts with SNX6. Interacts with PCSK9. Interacts with NAT8 and NAT8B. Interacts with BIN1. Interacts (via extracellular domain) with ADAM10 (via extracellular domain). Interacts with SORL1; this interaction may affect binding with APP and hence reduce APP cleavage. Interacts with NRDC AND NRG1. In terms of processing, palmitoylation mediates lipid raft localization. Acetylated in the endoplasmic reticulum at Lys-126, Lys-275, Lys-279, Lys-285, Lys-299, Lys-300 and Lys-307. Acetylation by NAT8 and NAT8B is transient and deacetylation probably occurs in the Golgi. Acetylation regulates the maturation, the transport to the plasma membrane, the stability and the expression of the protein. Post-translationally, ubiquitinated at Lys-501, ubiquitination leads to lysosomal degradation. Monoubiquitinated and 'Lys-63'-linked polyubitinated. Deubiquitnated by USP8; inhibits lysosomal degradation. In terms of processing, phosphorylation at Ser-498 is required for interaction with GGA1 and retrograded transport from endosomal compartments to the trans-Golgi network. Non-phosphorylated BACE1 enters a direct recycling route to the cell surface. N-Glycosylated. Addition of a bisecting N-acetylglucosamine by MGAT3 blocks lysosomal targeting, further degradation and is required for maintaining stability under stress conditions.

It localises to the cell membrane. The protein localises to the golgi apparatus. The protein resides in the trans-Golgi network. It is found in the endoplasmic reticulum. Its subcellular location is the endosome. It localises to the cell surface. The protein localises to the cytoplasmic vesicle membrane. The protein resides in the membrane raft. It is found in the lysosome. Its subcellular location is the late endosome. It localises to the early endosome. The protein localises to the recycling endosome. The protein resides in the cell projection. It is found in the axon. Its subcellular location is the dendrite. It catalyses the reaction Broad endopeptidase specificity. Cleaves Glu-Val-Asn-Leu-|-Asp-Ala-Glu-Phe in the Swedish variant of Alzheimer's amyloid precursor protein.. Its activity is regulated as follows. Inhibited by RTN3 and RTN4. Its function is as follows. Responsible for the proteolytic processing of the amyloid precursor protein (APP). Cleaves at the N-terminus of the A-beta peptide sequence, between residues 671 and 672 of APP, leads to the generation and extracellular release of beta-cleaved soluble APP, and a corresponding cell-associated C-terminal fragment which is later released by gamma-secretase. Cleaves CHL1. The polypeptide is Beta-secretase 1 (BACE1) (Bos taurus (Bovine)).